A 335-amino-acid polypeptide reads, in one-letter code: 3-dehydroquinate synthase (335 aa).

NAD(+) is bound by residues 56 to 61 (DGEKYK), 90 to 94 (GVITD), 114 to 115 (TT), K127, K135, and 153 to 156 (FLKT). Zn(2+) contacts are provided by E168, H227, and H243.

The protein belongs to the sugar phosphate cyclases superfamily. Dehydroquinate synthase family. NAD(+) is required as a cofactor. Co(2+) serves as cofactor. It depends on Zn(2+) as a cofactor.

It localises to the cytoplasm. The catalysed reaction is 7-phospho-2-dehydro-3-deoxy-D-arabino-heptonate = 3-dehydroquinate + phosphate. It participates in metabolic intermediate biosynthesis; chorismate biosynthesis; chorismate from D-erythrose 4-phosphate and phosphoenolpyruvate: step 2/7. Functionally, catalyzes the conversion of 3-deoxy-D-arabino-heptulosonate 7-phosphate (DAHP) to dehydroquinate (DHQ). The sequence is that of 3-dehydroquinate synthase from Pyrococcus furiosus (strain ATCC 43587 / DSM 3638 / JCM 8422 / Vc1).